Here is a 288-residue protein sequence, read N- to C-terminus: Quinate/shikimate dehydrogenase (288 aa).

Substrate is bound by residues lysine 71 and aspartate 107. NAD(+) contacts are provided by residues 132–135, 155–158, lysine 205, 232–235, and glycine 255; these read AGGA, NRRD, and CVYN.

This sequence belongs to the shikimate dehydrogenase family. Homodimer.

The enzyme catalyses L-quinate + NAD(+) = 3-dehydroquinate + NADH + H(+). It carries out the reaction L-quinate + NADP(+) = 3-dehydroquinate + NADPH + H(+). The catalysed reaction is shikimate + NADP(+) = 3-dehydroshikimate + NADPH + H(+). It catalyses the reaction shikimate + NAD(+) = 3-dehydroshikimate + NADH + H(+). It participates in metabolic intermediate biosynthesis; chorismate biosynthesis; chorismate from D-erythrose 4-phosphate and phosphoenolpyruvate: step 4/7. In terms of biological role, the actual biological function of YdiB remains unclear, nor is it known whether 3-dehydroshikimate or quinate represents the natural substrate. Catalyzes the reversible NAD-dependent reduction of both 3-dehydroshikimate (DHSA) and 3-dehydroquinate to yield shikimate (SA) and quinate, respectively. It can use both NAD or NADP for catalysis, however it has higher catalytic efficiency with NAD. This is Quinate/shikimate dehydrogenase from Escherichia coli O139:H28 (strain E24377A / ETEC).